A 160-amino-acid chain; its full sequence is Ureidoglycolate lyase (160 aa).

This sequence belongs to the ureidoglycolate lyase family. In terms of assembly, homodimer. Ni(2+) is required as a cofactor.

It catalyses the reaction (S)-ureidoglycolate = urea + glyoxylate. Its pathway is nitrogen metabolism; (S)-allantoin degradation. In terms of biological role, catalyzes the catabolism of the allantoin degradation intermediate (S)-ureidoglycolate, generating urea and glyoxylate. Involved in the anaerobic utilization of allantoin as sole nitrogen source. Reinforces the induction of genes involved in the degradation of allantoin and glyoxylate by producing glyoxylate. This chain is Ureidoglycolate lyase, found in Shigella flexneri serotype 5b (strain 8401).